We begin with the raw amino-acid sequence, 248 residues long: 3-deoxy-manno-octulosonate cytidylyltransferase (248 aa).

This sequence belongs to the KdsB family.

It is found in the cytoplasm. It carries out the reaction 3-deoxy-alpha-D-manno-oct-2-ulosonate + CTP = CMP-3-deoxy-beta-D-manno-octulosonate + diphosphate. It participates in nucleotide-sugar biosynthesis; CMP-3-deoxy-D-manno-octulosonate biosynthesis; CMP-3-deoxy-D-manno-octulosonate from 3-deoxy-D-manno-octulosonate and CTP: step 1/1. Its pathway is bacterial outer membrane biogenesis; lipopolysaccharide biosynthesis. Its function is as follows. Activates KDO (a required 8-carbon sugar) for incorporation into bacterial lipopolysaccharide in Gram-negative bacteria. This Shigella flexneri protein is 3-deoxy-manno-octulosonate cytidylyltransferase.